The chain runs to 225 residues: Protein ZW2 (225 aa).

Residues 7–225 form the DOG1 domain; the sequence is SETFASFFND…FYLRLRDLGV (219 aa).

Its function is as follows. May be involved in the regulation of abscisic acid (ABA) sensitivity. This chain is Protein ZW2, found in Arabidopsis thaliana (Mouse-ear cress).